The primary structure comprises 599 residues: Aspartate--tRNA ligase (599 aa).

Glu180 contributes to the L-aspartate binding site. The segment at 204 to 207 (QIFK) is aspartate. Arg226 contacts L-aspartate. ATP contacts are provided by residues 226–228 (RDE) and Gln235. His454 contributes to the L-aspartate binding site. Glu488 is a binding site for ATP. Arg495 provides a ligand contact to L-aspartate. 540 to 543 (GLDR) is an ATP binding site.

This sequence belongs to the class-II aminoacyl-tRNA synthetase family. Type 1 subfamily. Homodimer.

It localises to the cytoplasm. The enzyme catalyses tRNA(Asp) + L-aspartate + ATP = L-aspartyl-tRNA(Asp) + AMP + diphosphate. Catalyzes the attachment of L-aspartate to tRNA(Asp) in a two-step reaction: L-aspartate is first activated by ATP to form Asp-AMP and then transferred to the acceptor end of tRNA(Asp). This Clostridium botulinum (strain Eklund 17B / Type B) protein is Aspartate--tRNA ligase.